The sequence spans 189 residues: Peptidyl-tRNA hydrolase (189 aa).

Tyr14 is a binding site for tRNA. Residue His19 is the Proton acceptor of the active site. Phe64, Asn66, and Asn112 together coordinate tRNA.

It belongs to the PTH family. As to quaternary structure, monomer.

Its subcellular location is the cytoplasm. It catalyses the reaction an N-acyl-L-alpha-aminoacyl-tRNA + H2O = an N-acyl-L-amino acid + a tRNA + H(+). In terms of biological role, hydrolyzes ribosome-free peptidyl-tRNAs (with 1 or more amino acids incorporated), which drop off the ribosome during protein synthesis, or as a result of ribosome stalling. Its function is as follows. Catalyzes the release of premature peptidyl moieties from peptidyl-tRNA molecules trapped in stalled 50S ribosomal subunits, and thus maintains levels of free tRNAs and 50S ribosomes. This Zymomonas mobilis subsp. mobilis (strain ATCC 31821 / ZM4 / CP4) protein is Peptidyl-tRNA hydrolase.